The primary structure comprises 692 residues: Glycine--tRNA ligase beta subunit (692 aa).

The protein belongs to the class-II aminoacyl-tRNA synthetase family. Tetramer of two alpha and two beta subunits.

Its subcellular location is the cytoplasm. It carries out the reaction tRNA(Gly) + glycine + ATP = glycyl-tRNA(Gly) + AMP + diphosphate. In Limosilactobacillus fermentum (strain NBRC 3956 / LMG 18251) (Lactobacillus fermentum), this protein is Glycine--tRNA ligase beta subunit.